The chain runs to 223 residues: dITP/XTP pyrophosphatase (223 aa).

9 to 14 (TTNQNK) contributes to the substrate binding site. The active-site Proton acceptor is the aspartate 71. Residue aspartate 71 participates in Mg(2+) binding. Residues serine 72, 152 to 155 (FGYD), lysine 175, and 180 to 181 (HR) each bind substrate. Residues 203–223 (LSEEKPAKPDHSEFEGNDWSK) are disordered.

This sequence belongs to the HAM1 NTPase family. As to quaternary structure, homodimer. The cofactor is Mg(2+).

The catalysed reaction is XTP + H2O = XMP + diphosphate + H(+). The enzyme catalyses dITP + H2O = dIMP + diphosphate + H(+). It carries out the reaction ITP + H2O = IMP + diphosphate + H(+). In terms of biological role, pyrophosphatase that catalyzes the hydrolysis of nucleoside triphosphates to their monophosphate derivatives, with a high preference for the non-canonical purine nucleotides XTP (xanthosine triphosphate), dITP (deoxyinosine triphosphate) and ITP. Seems to function as a house-cleaning enzyme that removes non-canonical purine nucleotides from the nucleotide pool, thus preventing their incorporation into DNA/RNA and avoiding chromosomal lesions. This is dITP/XTP pyrophosphatase from Desulfotalea psychrophila (strain LSv54 / DSM 12343).